Consider the following 50-residue polypeptide: Temporin-SHc (50 aa).

The signal sequence occupies residues 1-10 (FLGTINLSLC). The propeptide occupies 11–35 (EQERDADEEERRDEPDGSNVEVEKR). Residue Phe48 is modified to Phenylalanine amide.

Expressed by the skin glands.

Its subcellular location is the secreted. It localises to the target cell membrane. In terms of biological role, amphipathic alpha-helical antimicrobial peptide with potent activity against some Gram-positive bacteria (MIC=4-&gt;80 uM), potent activity against fungi (MIC=10-20 uM), and no activity against Gram-negative bacteria. Does not display anti-leishmania activity. Does not show hemolytic activity (LC(50)&gt;80 uM). This Pelophylax saharicus (Sahara frog) protein is Temporin-SHc.